Consider the following 251-residue polypeptide: Triosephosphate isomerase (251 aa).

9–11 (NWK) contributes to the substrate binding site. Residue H95 is the Electrophile of the active site. Residue E167 is the Proton acceptor of the active site. Substrate contacts are provided by residues G173, S213, and 234-235 (GG).

It belongs to the triosephosphate isomerase family. As to quaternary structure, homodimer.

It is found in the cytoplasm. The catalysed reaction is D-glyceraldehyde 3-phosphate = dihydroxyacetone phosphate. Its pathway is carbohydrate biosynthesis; gluconeogenesis. It participates in carbohydrate degradation; glycolysis; D-glyceraldehyde 3-phosphate from glycerone phosphate: step 1/1. Functionally, involved in the gluconeogenesis. Catalyzes stereospecifically the conversion of dihydroxyacetone phosphate (DHAP) to D-glyceraldehyde-3-phosphate (G3P). The protein is Triosephosphate isomerase of Latilactobacillus sakei subsp. sakei (strain 23K) (Lactobacillus sakei subsp. sakei).